Here is a 187-residue protein sequence, read N- to C-terminus: MFLIVGLGNPGLKYEHTRHNMGFDAIENIAAKHNISIDKKGFKGLYGKGIIDGEKVILLKPYTYMNLSGESVVEAANYYKINKENIVVIYDDISLDVGKIRIRTKGSAGGHNGIKNIVLHLSSEEFPRVKVGVGEPTENLVNYVLGKFSQDERKKIEEVLNIVTEAVECMVVDGVQNAMNKFNGLKL.

Residue Tyr14 participates in tRNA binding. His19 serves as the catalytic Proton acceptor. TRNA is bound by residues Tyr64, Asn66, and Asn112.

The protein belongs to the PTH family. Monomer.

It is found in the cytoplasm. The catalysed reaction is an N-acyl-L-alpha-aminoacyl-tRNA + H2O = an N-acyl-L-amino acid + a tRNA + H(+). Its function is as follows. Hydrolyzes ribosome-free peptidyl-tRNAs (with 1 or more amino acids incorporated), which drop off the ribosome during protein synthesis, or as a result of ribosome stalling. Functionally, catalyzes the release of premature peptidyl moieties from peptidyl-tRNA molecules trapped in stalled 50S ribosomal subunits, and thus maintains levels of free tRNAs and 50S ribosomes. The polypeptide is Peptidyl-tRNA hydrolase (Clostridium acetobutylicum (strain ATCC 824 / DSM 792 / JCM 1419 / IAM 19013 / LMG 5710 / NBRC 13948 / NRRL B-527 / VKM B-1787 / 2291 / W)).